The sequence spans 217 residues: Adenylate kinase (217 aa).

10–15 provides a ligand contact to ATP; sequence GAGKGT. Residues 30–59 form an NMP region; it reads STGEILRAAVKSKTPMGVKAKEYMDQGALV. AMP-binding positions include Thr31, Arg36, 57 to 59, 85 to 88, and Gln92; these read ALV and GFPR. The LID stretch occupies residues 126 to 163; the sequence is GRRVCRACGRAFHVKFDPPLVDGVCDACGGELYQRDDD. Arg127 lines the ATP pocket. Zn(2+) is bound by residues Cys130, Cys133, Cys150, and Cys153. Residues Arg160 and Arg171 each coordinate AMP. ATP is bound at residue Glu199.

Belongs to the adenylate kinase family. In terms of assembly, monomer.

Its subcellular location is the cytoplasm. It carries out the reaction AMP + ATP = 2 ADP. Its pathway is purine metabolism; AMP biosynthesis via salvage pathway; AMP from ADP: step 1/1. Its function is as follows. Catalyzes the reversible transfer of the terminal phosphate group between ATP and AMP. Plays an important role in cellular energy homeostasis and in adenine nucleotide metabolism. In Geobacter sulfurreducens (strain ATCC 51573 / DSM 12127 / PCA), this protein is Adenylate kinase.